Reading from the N-terminus, the 73-residue chain is uncharacterized protein (73 aa).

The first 28 residues, 1 to 28 (MKFLLSVIAGLLILALYLFWKVQPPVWI), serve as a signal peptide directing secretion.

This is an uncharacterized protein from Bacillus subtilis (strain 168).